The chain runs to 273 residues: Undecaprenyl-diphosphatase (273 aa).

A run of 7 helical transmembrane segments spans residues 6–26 (SLLI…LPVS), 45–65 (AKTF…VMFW), 90–110 (LTLI…LVFH), 116–136 (LFNP…LIAA), 190–210 (YAAS…ATVL), 222–242 (ADIP…LIAI), and 252–272 (ISFI…YVVF).

This sequence belongs to the UppP family.

Its subcellular location is the cell inner membrane. The enzyme catalyses di-trans,octa-cis-undecaprenyl diphosphate + H2O = di-trans,octa-cis-undecaprenyl phosphate + phosphate + H(+). Catalyzes the dephosphorylation of undecaprenyl diphosphate (UPP). Confers resistance to bacitracin. This is Undecaprenyl-diphosphatase from Salmonella heidelberg (strain SL476).